The sequence spans 546 residues: NAD(P)H-quinone oxidoreductase chain 4 (546 aa).

14 consecutive transmembrane segments (helical) span residues 24–44 (FPWLSVSILFPIGCAFLIPFF), 56–76 (FALSVALITFLVTVGSYINGF), 108–128 (MPLILLTSFITALAVLAAWPV), 132–152 (PKLFFFLILIMDGGQIAVFAV), 156–176 (LLFFLSWELELLPVYLLLAIW), 188–208 (FIIYTAGSSIFILLAALAMGF), 232–252 (ILCYIGLLIAFGVKLPIVPLH), 263–283 (TAPVHMLLAGILLKMGGYALL), 297–317 (FSPLLIVLGVVNIIYAALTSF), 326–346 (IAYSSISHMGFVLIGIGSFSS), 352–372 (AMLQMVSHGLIGASLFFLVGA), 396–416 (FALWTACSLASLALPGMSGFV), 437–457 (VIMASLAAIGVILTPIYLLSM), and 484–504 (IYIIACLLLPIIGIGLYPRLV).

Belongs to the complex I subunit 4 family.

It is found in the cellular thylakoid membrane. The catalysed reaction is a plastoquinone + NADH + (n+1) H(+)(in) = a plastoquinol + NAD(+) + n H(+)(out). The enzyme catalyses a plastoquinone + NADPH + (n+1) H(+)(in) = a plastoquinol + NADP(+) + n H(+)(out). Functionally, NDH-1 shuttles electrons from NAD(P)H, via FMN and iron-sulfur (Fe-S) centers, to quinones in the respiratory chain. The immediate electron acceptor for the enzyme in this species is believed to be plastoquinone. Couples the redox reaction to proton translocation (for every two electrons transferred, four hydrogen ions are translocated across the cytoplasmic membrane), and thus conserves the redox energy in a proton gradient. The chain is NAD(P)H-quinone oxidoreductase chain 4 from Prochlorococcus marinus subsp. pastoris (strain CCMP1986 / NIES-2087 / MED4).